Reading from the N-terminus, the 251-residue chain is MTTQSLEAEAKALNDKLESLDLAGRLAMVAGLDGRAVFTTSLGIEDQVITAAIGINRLDIEVATLKTGRLFNETVALVEETEETYNILIKRYYPEKADIEAYVAQYGMNGFYESVEARHACCGVRKLKPLARALEGASYWITGLRRGQSGNRATTPFAEADLERGLIKINPLADWDIETIRAHVAAEAIPVNPLHGRGYPSIGCEPCTRAIKPGEPERAGRWWWENDEKRECGLHVAEAASSIIPNASSAA.

Cys121, Cys122, Cys204, and Cys207 together coordinate [4Fe-4S] cluster. Residue Cys232 is the Nucleophile; cysteine thiosulfonate intermediate of the active site.

Belongs to the PAPS reductase family. CysH subfamily. [4Fe-4S] cluster is required as a cofactor.

It localises to the cytoplasm. The catalysed reaction is [thioredoxin]-disulfide + sulfite + AMP + 2 H(+) = adenosine 5'-phosphosulfate + [thioredoxin]-dithiol. It functions in the pathway sulfur metabolism; hydrogen sulfide biosynthesis; sulfite from sulfate. Its function is as follows. Catalyzes the formation of sulfite from adenosine 5'-phosphosulfate (APS) using thioredoxin as an electron donor. The polypeptide is Adenosine 5'-phosphosulfate reductase (Sinorhizobium fredii (strain USDA 257)).